The sequence spans 126 residues: Histone H2B type F-S (126 aa).

Over residues Met1–Lys12 the composition is skewed to low complexity. Positions Met1–Glu36 are disordered. Pro2 carries the N-acetylproline modification. Glu3 carries the ADP-ribosyl glutamic acid modification. Lys6 is subject to N6-(2-hydroxyisobutyryl)lysine; alternate. Lys6 is modified (N6-(beta-hydroxybutyryl)lysine; alternate). N6-acetyllysine; alternate is present on Lys6. The residue at position 6 (Lys6) is an N6-butyryllysine; alternate. At Lys6 the chain carries N6-crotonyllysine; alternate. Lys6 is subject to N6-lactoyllysine; alternate. Lys6 participates in a covalent cross-link: Glycyl lysine isopeptide (Lys-Gly) (interchain with G-Cter in SUMO2); alternate. Residue Ser7 is modified to ADP-ribosylserine. At Lys12 the chain carries N6-(beta-hydroxybutyryl)lysine; alternate. An N6-acetyllysine; alternate mark is found at Lys12 and Lys13. N6-crotonyllysine; alternate is present on residues Lys12 and Lys13. The residue at position 12 (Lys12) is an N6-lactoyllysine; alternate. Lys13 carries the post-translational modification N6-(2-hydroxyisobutyryl)lysine; alternate. A Phosphoserine; by STK4/MST1 modification is found at Ser15. N6-acetyllysine; alternate occurs at positions 16, 17, 21, and 24. An N6-crotonyllysine; alternate mark is found at Lys16, Lys17, Lys21, and Lys24. N6-lactoyllysine; alternate is present on residues Lys16, Lys17, Lys21, and Lys24. N6-(beta-hydroxybutyryl)lysine; alternate is present on residues Lys17 and Lys21. Lys17 is subject to N6-glutaryllysine; alternate. 2 positions are modified to N6-(2-hydroxyisobutyryl)lysine; alternate: Lys21 and Lys24. The residue at position 21 (Lys21) is an N6-butyryllysine; alternate. A Glycyl lysine isopeptide (Lys-Gly) (interchain with G-Cter in SUMO2); alternate cross-link involves residue Lys21. Lys25 is modified (N6-(2-hydroxyisobutyryl)lysine). Lys35 bears the N6-(2-hydroxyisobutyryl)lysine; alternate mark. An N6-(beta-hydroxybutyryl)lysine; alternate modification is found at Lys35. Lys35 is modified (N6-crotonyllysine; alternate). Lys35 carries the post-translational modification N6-glutaryllysine; alternate. An N6-succinyllysine; alternate modification is found at Lys35. A Glycyl lysine isopeptide (Lys-Gly) (interchain with G-Cter in ubiquitin); alternate cross-link involves residue Lys35. Residue Glu36 is modified to PolyADP-ribosyl glutamic acid. Position 37 is a phosphoserine; by AMPK (Ser37). 3 positions are modified to N6-(2-hydroxyisobutyryl)lysine; alternate: Lys44, Lys47, and Lys58. At Lys44 the chain carries N6-lactoyllysine; alternate. 2 positions are modified to N6-glutaryllysine; alternate: Lys44 and Lys47. At Lys47 the chain carries N6-methyllysine; alternate. Residue Lys58 is modified to N6,N6-dimethyllysine; alternate. Arg80 is subject to Dimethylated arginine. Lys86 carries the N6-(2-hydroxyisobutyryl)lysine; alternate modification. Position 86 is an N6-(beta-hydroxybutyryl)lysine; alternate (Lys86). At Lys86 the chain carries N6-acetyllysine; alternate. An N6-lactoyllysine; alternate modification is found at Lys86. Lys86 is subject to N6,N6,N6-trimethyllysine; alternate. An omega-N-methylarginine mark is found at Arg87 and Arg93. Lys109 carries the N6-(2-hydroxyisobutyryl)lysine; alternate modification. Lys109 is modified (N6-lactoyllysine; alternate). N6-glutaryllysine; alternate is present on Lys109. Lys109 carries the N6-methyllysine; alternate modification. The O-linked (GlcNAc) serine glycan is linked to Ser113. Position 116 is a phosphothreonine (Thr116). Lys117 and Lys121 each carry N6-(2-hydroxyisobutyryl)lysine; alternate. An N6-(beta-hydroxybutyryl)lysine; alternate mark is found at Lys117 and Lys121. N6-lactoyllysine; alternate occurs at positions 117 and 121. N6-glutaryllysine; alternate is present on residues Lys117 and Lys121. Lys117 and Lys121 each carry N6-succinyllysine; alternate. Lys117 carries the N6-malonyllysine; alternate modification. An N6-methylated lysine; alternate modification is found at Lys117. Residue Lys121 forms a Glycyl lysine isopeptide (Lys-Gly) (interchain with G-Cter in ubiquitin); alternate linkage.

This sequence belongs to the histone H2B family. The nucleosome is a histone octamer containing two molecules each of H2A, H2B, H3 and H4 assembled in one H3-H4 heterotetramer and two H2A-H2B heterodimers. The octamer wraps approximately 147 bp of DNA. Monoubiquitination at Lys-35 (H2BK34Ub) by the MSL1/MSL2 dimer is required for histone H3 'Lys-4' (H3K4me) and 'Lys-79' (H3K79me) methylation and transcription activation at specific gene loci, such as HOXA9 and MEIS1 loci. Similarly, monoubiquitination at Lys-121 (H2BK120Ub) by the RNF20/40 complex gives a specific tag for epigenetic transcriptional activation and is also prerequisite for histone H3 'Lys-4' and 'Lys-79' methylation. It also functions cooperatively with the FACT dimer to stimulate elongation by RNA polymerase II. H2BK120Ub also acts as a regulator of mRNA splicing: deubiquitination by USP49 is required for efficient cotranscriptional splicing of a large set of exons. In terms of processing, phosphorylation at Ser-37 (H2BS36ph) by AMPK in response to stress promotes transcription. Phosphorylated on Ser-15 (H2BS14ph) by STK4/MST1 during apoptosis; which facilitates apoptotic chromatin condensation. Also phosphorylated on Ser-15 in response to DNA double strand breaks (DSBs), and in correlation with somatic hypermutation and immunoglobulin class-switch recombination. Post-translationally, glcNAcylation at Ser-113 promotes monoubiquitination of Lys-121. It fluctuates in response to extracellular glucose, and associates with transcribed genes. ADP-ribosylated by PARP1 or PARP2 on Ser-7 (H2BS6ADPr) in response to DNA damage. H2BS6ADPr promotes recruitment of CHD1L. Mono-ADP-ribosylated on Glu-3 (H2BE2ADPr) by PARP3 in response to single-strand breaks. Poly ADP-ribosylation on Glu-36 (H2BE35ADPr) by PARP1 regulates adipogenesis: it inhibits phosphorylation at Ser-37 (H2BS36ph), thereby blocking expression of pro-adipogenetic genes. In terms of processing, crotonylation (Kcr) is specifically present in male germ cells and marks testis-specific genes in post-meiotic cells, including X-linked genes that escape sex chromosome inactivation in haploid cells. Crotonylation marks active promoters and enhancers and confers resistance to transcriptional repressors. It is also associated with post-meiotically activated genes on autosomes. Post-translationally, lactylated in macrophages by EP300/P300 by using lactoyl-CoA directly derived from endogenous or exogenous lactate, leading to stimulates gene transcription.

It is found in the nucleus. The protein resides in the chromosome. Functionally, core component of nucleosome. Nucleosomes wrap and compact DNA into chromatin, limiting DNA accessibility to the cellular machineries which require DNA as a template. Histones thereby play a central role in transcription regulation, DNA repair, DNA replication and chromosomal stability. DNA accessibility is regulated via a complex set of post-translational modifications of histones, also called histone code, and nucleosome remodeling. Has broad antibacterial activity. May contribute to the formation of the functional antimicrobial barrier of the colonic epithelium, and to the bactericidal activity of amniotic fluid. In Homo sapiens (Human), this protein is Histone H2B type F-S.